The primary structure comprises 233 residues: Large ribosomal subunit protein uL1 (233 aa).

Belongs to the universal ribosomal protein uL1 family. Part of the 50S ribosomal subunit.

Its function is as follows. Binds directly to 23S rRNA. The L1 stalk is quite mobile in the ribosome, and is involved in E site tRNA release. In terms of biological role, protein L1 is also a translational repressor protein, it controls the translation of the L11 operon by binding to its mRNA. This is Large ribosomal subunit protein uL1 from Syntrophotalea carbinolica (strain DSM 2380 / NBRC 103641 / GraBd1) (Pelobacter carbinolicus).